A 260-amino-acid chain; its full sequence is Acetylglutamate kinase (260 aa).

Substrate contacts are provided by residues 46–47 (GG), R68, and N160.

This sequence belongs to the acetylglutamate kinase family. ArgB subfamily.

Its subcellular location is the cytoplasm. It carries out the reaction N-acetyl-L-glutamate + ATP = N-acetyl-L-glutamyl 5-phosphate + ADP. It functions in the pathway amino-acid biosynthesis; L-arginine biosynthesis; N(2)-acetyl-L-ornithine from L-glutamate: step 2/4. In terms of biological role, catalyzes the ATP-dependent phosphorylation of N-acetyl-L-glutamate. This is Acetylglutamate kinase from Shewanella sp. (strain W3-18-1).